Reading from the N-terminus, the 519-residue chain is 2,3-bisphosphoglycerate-independent phosphoglycerate mutase (519 aa).

Residues Asp18 and Ser68 each contribute to the Mn(2+) site. Residue Ser68 is the Phosphoserine intermediate of the active site. Residues His129, Arg159–Asp160, Arg191, Arg197, Arg267–Arg270, and Lys341 contribute to the substrate site. Positions 408, 412, 449, 450, and 468 each coordinate Mn(2+).

The protein belongs to the BPG-independent phosphoglycerate mutase family. Monomer. The cofactor is Mn(2+).

It catalyses the reaction (2R)-2-phosphoglycerate = (2R)-3-phosphoglycerate. It participates in carbohydrate degradation; glycolysis; pyruvate from D-glyceraldehyde 3-phosphate: step 3/5. Catalyzes the interconversion of 2-phosphoglycerate and 3-phosphoglycerate. The polypeptide is 2,3-bisphosphoglycerate-independent phosphoglycerate mutase (Coxiella burnetii (strain RSA 331 / Henzerling II)).